A 143-amino-acid chain; its full sequence is Large ribosomal subunit protein uL11 (143 aa).

The protein belongs to the universal ribosomal protein uL11 family. As to quaternary structure, part of the ribosomal stalk of the 50S ribosomal subunit. Interacts with L10 and the large rRNA to form the base of the stalk. L10 forms an elongated spine to which L12 dimers bind in a sequential fashion forming a multimeric L10(L12)X complex. Post-translationally, one or more lysine residues are methylated.

Functionally, forms part of the ribosomal stalk which helps the ribosome interact with GTP-bound translation factors. This chain is Large ribosomal subunit protein uL11, found in Paraburkholderia phymatum (strain DSM 17167 / CIP 108236 / LMG 21445 / STM815) (Burkholderia phymatum).